The chain runs to 426 residues: Glutamate-1-semialdehyde 2,1-aminomutase (426 aa).

Lys265 bears the N6-(pyridoxal phosphate)lysine mark.

This sequence belongs to the class-III pyridoxal-phosphate-dependent aminotransferase family. HemL subfamily. As to quaternary structure, homodimer. Pyridoxal 5'-phosphate is required as a cofactor.

The protein localises to the cytoplasm. It carries out the reaction (S)-4-amino-5-oxopentanoate = 5-aminolevulinate. It functions in the pathway porphyrin-containing compound metabolism; protoporphyrin-IX biosynthesis; 5-aminolevulinate from L-glutamyl-tRNA(Glu): step 2/2. The protein is Glutamate-1-semialdehyde 2,1-aminomutase of Salmonella gallinarum (strain 287/91 / NCTC 13346).